Consider the following 216-residue polypeptide: Small ribosomal subunit protein uS4 (216 aa).

Positions 111 to 175 constitute an S4 RNA-binding domain; sequence RRLQTQVLRL…SPLVSESHPE (65 aa). The segment at 194–216 is disordered; that stretch reads VAEAKQAKEKPPERGGRKRRGRR. The span at 198-208 shows a compositional bias: basic and acidic residues; it reads KQAKEKPPERG.

This sequence belongs to the universal ribosomal protein uS4 family. Part of the 30S ribosomal subunit. Contacts protein S5. The interaction surface between S4 and S5 is involved in control of translational fidelity.

Functionally, one of the primary rRNA binding proteins, it binds directly to 16S rRNA where it nucleates assembly of the body of the 30S subunit. In terms of biological role, with S5 and S12 plays an important role in translational accuracy. This Methanosarcina barkeri (strain Fusaro / DSM 804) protein is Small ribosomal subunit protein uS4.